The sequence spans 618 residues: Manganese lipoxygenase (618 aa).

The first 16 residues, 1–16, serve as a signal peptide directing secretion; that stretch reads MRSRILAIVFAARHVA. Low complexity predominate over residues 36–45; it reads SSTTVLPSPT. A disordered region spans residues 36 to 58; it reads SSTTVLPSPTQYTLPNNDPNQGA. Polar residues predominate over residues 46–58; the sequence is QYTLPNNDPNQGA. The region spanning 47–618 is the Lipoxygenase domain; it reads YTLPNNDPNQ…PAVNPFFLSV (572 aa). N-linked (GlcNAc...) asparagine glycans are attached at residues Asn-60, Asn-91, Asn-106, Asn-116, and Asn-157. Mn(2+)-binding residues include His-290, His-294, His-478, and Asn-482. Asn-513 is a glycosylation site (N-linked (GlcNAc...) asparagine). Val-618 is a Mn(2+) binding site.

This sequence belongs to the lipoxygenase family. Manganese lipoxygenase subfamily. The cofactor is Mn(2+). In terms of processing, N- and O-glycosylated.

It is found in the secreted. The enzyme catalyses (9Z,12Z)-octadecadienoate + O2 = (11S)-hydroperoxy-(9Z,12Z)-octadecadienoate. It carries out the reaction (9Z,12Z)-octadecadienoate + O2 = (13R)-hydroperoxy-(9Z,11E)-octadecadienoate. It catalyses the reaction (9Z,12Z,15Z)-octadecatrienoate + O2 = (11S)-hydroperoxy-(9Z,12Z,15Z)-octadecatrienoate. The catalysed reaction is (9Z,12Z,15Z)-octadecatrienoate + O2 = (13R)-hydroperoxy-(9Z,11E,15Z)-octadecatrienoate. Lipoxygenase that metabolizes linoleic and alpha-linolenic acids to 11S- and 13R-hydroperoxy fatty acids. At the end of lipoxygenation, the intermediate product 11S-HPODE from linoleic acid is then transformed into 13R-HPODE as the final product. It also acts on alpha-linolenic acid producing 11S-HPOTrE and 13R-HPOTrE with subsequent transformation of 11S-HPOTrE to 13R-HPOTrE as final product. In Gaeumannomyces avenae (Oat take-all root rot fungus), this protein is Manganese lipoxygenase.